The following is a 328-amino-acid chain: Cytochrome f (328 aa).

The N-terminal stretch at 1-44 is a signal peptide; sequence MRTPDFSAIWQASKQLTARIILLAFATFALYVFHDLAFPQGAAA. The heme site is built by Y45, C66, C69, and H70. A helical transmembrane segment spans residues 294-314; the sequence is IKGLMVFLAGIMLAQILLVIK.

This sequence belongs to the cytochrome f family. In terms of assembly, the 4 large subunits of the cytochrome b6-f complex are cytochrome b6, subunit IV (17 kDa polypeptide, PetD), cytochrome f and the Rieske protein, while the 4 small subunits are PetG, PetL, PetM and PetN. The complex functions as a dimer. Heme is required as a cofactor.

Its subcellular location is the cellular thylakoid membrane. In terms of biological role, component of the cytochrome b6-f complex, which mediates electron transfer between photosystem II (PSII) and photosystem I (PSI), cyclic electron flow around PSI, and state transitions. The chain is Cytochrome f from Rippkaea orientalis (strain PCC 8801 / RF-1) (Cyanothece sp. (strain PCC 8801)).